The following is a 213-amino-acid chain: Thiamine-phosphate synthase (213 aa).

4-amino-2-methyl-5-(diphosphooxymethyl)pyrimidine-binding positions include 41–45 and asparagine 73; that span reads QFRVK. Residues aspartate 74 and aspartate 93 each contribute to the Mg(2+) site. Threonine 112 serves as a coordination point for 4-amino-2-methyl-5-(diphosphooxymethyl)pyrimidine. 2-[(2R,5Z)-2-carboxy-4-methylthiazol-5(2H)-ylidene]ethyl phosphate is bound at residue 139 to 141; it reads SAT. Lysine 142 contacts 4-amino-2-methyl-5-(diphosphooxymethyl)pyrimidine. Glycine 171 is a 2-[(2R,5Z)-2-carboxy-4-methylthiazol-5(2H)-ylidene]ethyl phosphate binding site.

It belongs to the thiamine-phosphate synthase family. It depends on Mg(2+) as a cofactor.

The enzyme catalyses 2-[(2R,5Z)-2-carboxy-4-methylthiazol-5(2H)-ylidene]ethyl phosphate + 4-amino-2-methyl-5-(diphosphooxymethyl)pyrimidine + 2 H(+) = thiamine phosphate + CO2 + diphosphate. It carries out the reaction 2-(2-carboxy-4-methylthiazol-5-yl)ethyl phosphate + 4-amino-2-methyl-5-(diphosphooxymethyl)pyrimidine + 2 H(+) = thiamine phosphate + CO2 + diphosphate. It catalyses the reaction 4-methyl-5-(2-phosphooxyethyl)-thiazole + 4-amino-2-methyl-5-(diphosphooxymethyl)pyrimidine + H(+) = thiamine phosphate + diphosphate. It functions in the pathway cofactor biosynthesis; thiamine diphosphate biosynthesis; thiamine phosphate from 4-amino-2-methyl-5-diphosphomethylpyrimidine and 4-methyl-5-(2-phosphoethyl)-thiazole: step 1/1. Condenses 4-methyl-5-(beta-hydroxyethyl)thiazole monophosphate (THZ-P) and 2-methyl-4-amino-5-hydroxymethyl pyrimidine pyrophosphate (HMP-PP) to form thiamine monophosphate (TMP). This is Thiamine-phosphate synthase from Erythrobacter litoralis (strain HTCC2594).